Reading from the N-terminus, the 616-residue chain is UPF0329 protein ECU02_1540 (616 aa).

Basic and acidic residues-rich tracts occupy residues 350–359 and 369–381; these read EREKREESKG and GAGEAKEESKEED. The segment at 350-427 is disordered; sequence EREKREESKG…RKGDGHHYKI (78 aa). Over residues 382 to 396 the composition is skewed to acidic residues; sequence GKEEEGVEAEEEESA. The segment covering 408-427 has biased composition (basic residues); that stretch reads ARRKKSLKGKRKGDGHHYKI.

Belongs to the UPF0329 family.

This Encephalitozoon cuniculi (strain GB-M1) (Microsporidian parasite) protein is UPF0329 protein ECU02_1540.